We begin with the raw amino-acid sequence, 232 residues long: Large ribosomal subunit protein uL1 (232 aa).

Belongs to the universal ribosomal protein uL1 family. As to quaternary structure, part of the 50S ribosomal subunit.

In terms of biological role, binds directly to 23S rRNA. The L1 stalk is quite mobile in the ribosome, and is involved in E site tRNA release. Its function is as follows. Protein L1 is also a translational repressor protein, it controls the translation of the L11 operon by binding to its mRNA. The polypeptide is Large ribosomal subunit protein uL1 (Burkholderia mallei (strain NCTC 10247)).